The primary structure comprises 247 residues: UPF0309 protein Teth39_1980 (247 aa).

The region spanning 31–213 (IANSLLKEED…EAEIVFIMIK (183 aa)) is the SIS domain.

It belongs to the UPF0309 family.

The polypeptide is UPF0309 protein Teth39_1980 (Thermoanaerobacter pseudethanolicus (strain ATCC 33223 / 39E) (Clostridium thermohydrosulfuricum)).